The chain runs to 95 residues: Co-chaperonin GroES (95 aa).

It belongs to the GroES chaperonin family. In terms of assembly, heptamer of 7 subunits arranged in a ring. Interacts with the chaperonin GroEL.

The protein resides in the cytoplasm. Together with the chaperonin GroEL, plays an essential role in assisting protein folding. The GroEL-GroES system forms a nano-cage that allows encapsulation of the non-native substrate proteins and provides a physical environment optimized to promote and accelerate protein folding. GroES binds to the apical surface of the GroEL ring, thereby capping the opening of the GroEL channel. The polypeptide is Co-chaperonin GroES (Ruegeria pomeroyi (strain ATCC 700808 / DSM 15171 / DSS-3) (Silicibacter pomeroyi)).